The following is a 232-amino-acid chain: TIR domain-containing adapter molecule 2 (232 aa).

Residues 1–39 show a composition bias toward basic and acidic residues; that stretch reads MGVGKSKLDKCPLSWHKKDSVDADQDGHESDSKNSEEAC. The segment at 1–70 is disordered; the sequence is MGVGKSKLDK…EAKGAGPEEQ (70 aa). A lipid anchor (N-myristoyl glycine) is attached at Gly-2. Residues 74–226 enclose the TIR domain; sequence EFLKFVILHA…SIWKETRSVS (153 aa). Tyr-164 bears the Phosphotyrosine mark.

As to quaternary structure, homodimer. Interacts with TLR4, TICAM1, IRF3 and IRF7 in response to LPS. Interacts with IL1R1, IL1RAP, IRAK2, IRAK3 and TRAF6. Interacts with protein kinase-inactive mutants of IRAK1 and IRAK4. Isoform 1 interacts with isoform 2; the interaction occurs in late endosomes and disrupts the interaction between isoform 1 and TICAM1. Interacts with MYD88; the interaction decreases after IL-18 stimulation in a time-dependent manner. Interacts with IL18R1 and IL18RAP. Interacts with TLR2. Interacts with RAB11FIP2. Myristoylated. Required for membrane association which is critical for its ability to initiate efficient signaling. Post-translationally, phosphorylated by PRKCE in response to LPS. Phosphorylation is essential for its function. It is depleted from the membrane upon phosphorylation. Tyrosine phosphorylation is inhibited by phosphatase PTPN4.

Its subcellular location is the cytoplasm. It is found in the golgi apparatus. The protein localises to the cell membrane. The protein resides in the early endosome. It localises to the late endosome. Its subcellular location is the endoplasmic reticulum. It is found in the cell projection. The protein localises to the phagocytic cup. Functions as a sorting adapter in different signaling pathways to facilitate downstream signaling leading to type I interferon induction. In TLR4 signaling, physically bridges TLR4 and TICAM1 and functionally transmits signal to TICAM1 in early endosomes after endocytosis of TLR4. In TLR2 signaling, physically bridges TLR2 and MYD88 and is required for the TLR2-dependent movement of MYD88 to endosomes following ligand engagement. Involved in IL-18 signaling and is proposed to function as a sorting adapter for MYD88 in IL-18 signaling during adaptive immune response. Forms a complex with RAB11FIP2 that is recruited to the phagosomes to promote the activation of the actin-regulatory GTPases RAC1 and CDC42 and subsequent phagocytosis of Gram-negative bacteria. This chain is TIR domain-containing adapter molecule 2 (Ticam2), found in Mus musculus (Mouse).